Here is a 743-residue protein sequence, read N- to C-terminus: Glycerol-3-phosphate O-acyltransferase 2 (743 aa).

Residues 1–34 lie on the Lumenal side of the membrane; that stretch reads MSAPAADHNAAKPIPHVPQASRRYKNSYNGFVYN. A helical membrane pass occupies residues 35-55; the sequence is IHTWLYDVSVFLFNILFTIFF. Over 56-442 the chain is Cytoplasmic; the sequence is REIKVRGAYN…TKLEALRCFV (387 aa). Residues 443–457 traverse the membrane as a helical segment; it reads TLIVRLIKFSVFAIL. Position 458 (Ser-458) is a topological domain, lumenal. A helical transmembrane segment spans residues 459–473; the sequence is LPGSILFTPIFIICR. Residues 474-501 are Cytoplasmic-facing; that stretch reads VYSEKKAKEGLKKSLVKIKGTDLLATWK. A helical membrane pass occupies residues 502–522; that stretch reads LIVALILAPILYVTYSILLII. The Lumenal portion of the chain corresponds to 523-531; sequence LARKQHYCR. A helical transmembrane segment spans residues 532–552; the sequence is IWVPSNNAFIQFVYFYALLVF. At 553-743 the chain is on the cytoplasmic side; that stretch reads TTYSSLKTGE…RQKREHEKKE (191 aa). Phosphoserine is present on residues Ser-632, Ser-637, Ser-647, Ser-651, Ser-654, Ser-657, Ser-664, Ser-668, and Ser-671. Thr-673 is subject to Phosphothreonine. The segment at 682 to 743 is disordered; the sequence is KQGQWKSEGE…RQKREHEKKE (62 aa). Ser-688 carries the phosphoserine modification. Residues 691–700 show a composition bias toward acidic residues; the sequence is ETSEDEDEFD. Thr-692 carries the phosphothreonine modification. At Ser-693 the chain carries Phosphoserine.

Belongs to the GPAT/DAPAT family. Phosphorylated at a conserved motif involving Ser-664, Ser-668 and Ser-671. This phosphorylation plays a critical role for efficient TAG mobilization. Phosphorylation deficiency at this motif increases the enzyme activity and consequently induces de novo formation of phosphatidic acid.

It is found in the lipid droplet. Its subcellular location is the endoplasmic reticulum membrane. It catalyses the reaction sn-glycerol 3-phosphate + an acyl-CoA = a 1-acyl-sn-glycero-3-phosphate + CoA. The enzyme catalyses dihydroxyacetone phosphate + an acyl-CoA = a 1-acylglycerone 3-phosphate + CoA. The catalysed reaction is sn-glycerol 3-phosphate + hexadecanoyl-CoA = 1-hexadecanoyl-sn-glycero-3-phosphate + CoA. It carries out the reaction (9Z)-hexadecenoyl-CoA + sn-glycerol 3-phosphate = 1-(9Z-hexadecenoyl)-sn-glycero-3-phosphate + CoA. It catalyses the reaction sn-glycerol 3-phosphate + octadecanoyl-CoA = 1-octadecanoyl-sn-glycero-3-phosphate + CoA. The enzyme catalyses sn-glycerol 3-phosphate + (9Z)-octadecenoyl-CoA = 1-(9Z-octadecenoyl)-sn-glycero-3-phosphate + CoA. It functions in the pathway phospholipid metabolism; CDP-diacylglycerol biosynthesis; CDP-diacylglycerol from sn-glycerol 3-phosphate: step 1/3. In terms of biological role, dual substrate-specific glycerol-3-phosphate/dihydroxyacetone phosphate sn-1 acyltransferase, catalyzing the first and committed reaction in the de novo synthesis of glycerophospholipids and triacylglycerols (TAGs). Can use both Gly-3-P and dihydroxyacetone phosphate with similar efficiencies and has a broad fatty acyl-CoA specificity profile. Transfers a fatty acid from fatty acyl-CoA to the sn-1 position of glycerol-3-phosphate to produce lysophosphatidic acid (LysoPA). These lipids not only are precursors of glycerolipids, but also are dynamic components of signal transduction systems that control cell physiology. In Saccharomyces cerevisiae (strain ATCC 204508 / S288c) (Baker's yeast), this protein is Glycerol-3-phosphate O-acyltransferase 2 (GPT2).